The sequence spans 356 residues: Guanine nucleotide-binding protein alpha-3 subunit (356 aa).

Residues 1–26 are disordered; it reads MGACMSKNDEETEQKKRSQKIDRDLE. Gly2 is lipidated: N-myristoyl glycine. The S-palmitoyl cysteine moiety is linked to residue Cys4. Basic and acidic residues predominate over residues 7–23; the sequence is KNDEETEQKKRSQKIDR. Positions 34–356 constitute a G-alpha domain; that stretch reads KECKILLLGS…NNALKDSGIL (323 aa). A G1 motif region spans residues 37 to 50; it reads KILLLGSGESGKST. GTP contacts are provided by residues 42–49, 179–185, 204–208, 273–276, and Ala328; these read GSGESGKS, LRARTKT, DVGGQ, and NKVD. Mg(2+)-binding residues include Ser49 and Thr185. A G2 motif region spans residues 177–185; the sequence is DVLRARTKT. A G3 motif region spans residues 200–209; sequence IHMFDVGGQR. A G4 motif region spans residues 269–276; that stretch reads ILFLNKVD. The tract at residues 326–331 is G5 motif; that stretch reads TQATDT.

The protein belongs to the G-alpha family. G(q) subfamily. As to quaternary structure, g proteins are composed of 3 units; alpha, beta and gamma. The alpha chain contains the guanine nucleotide binding site.

Guanine nucleotide-binding proteins (G proteins) are involved as modulators or transducers in various transmembrane signaling systems. Involved in conidiation. This chain is Guanine nucleotide-binding protein alpha-3 subunit (gna-3), found in Neurospora crassa (strain ATCC 24698 / 74-OR23-1A / CBS 708.71 / DSM 1257 / FGSC 987).